The chain runs to 165 residues: Regulator of ribonuclease activity A (165 aa).

It belongs to the RraA family. Homotrimer. Binds to both RNA-binding sites in the C-terminal region of Rne and to RhlB.

Its subcellular location is the cytoplasm. Functionally, globally modulates RNA abundance by binding to RNase E (Rne) and regulating its endonucleolytic activity. Can modulate Rne action in a substrate-dependent manner by altering the composition of the degradosome. Modulates RNA-binding and helicase activities of the degradosome. This is Regulator of ribonuclease activity A from Actinobacillus pleuropneumoniae serotype 7 (strain AP76).